We begin with the raw amino-acid sequence, 545 residues long: Zona pellucida sperm-binding protein 4 (545 aa).

The signal sequence occupies residues Met-1–Gly-28. Residues Gln-29–Thr-518 lie on the Extracellular side of the membrane. Residues Asn-50 and Asn-74 are each glycosylated (N-linked (GlcNAc...) asparagine). The 45-residue stretch at Lys-148–Asn-192 folds into the P-type domain. In terms of domain architecture, ZP spans His-197–Ser-471. An N-linked (GlcNAc...) asparagine glycan is attached at Asn-228. Thr-312 is a glycosylation site (O-linked (GalNAc...) threonine). Asn-336 is a glycosylation site (N-linked (GlcNAc...) asparagine). A disulfide bridge connects residues Cys-377 and Cys-451. The propeptide at Arg-472–Arg-545 is removed in mature form. N-linked (GlcNAc...) asparagine glycosylation is present at Asn-483. Residues Leu-519 to Leu-539 form a helical membrane-spanning segment. Over Ala-540–Arg-545 the chain is Cytoplasmic.

The protein belongs to the ZP domain family. ZPB subfamily. In terms of processing, proteolytically cleaved before the transmembrane segment to yield the secreted ectodomain incorporated in the zona pellucida. In terms of tissue distribution, expressed in oocytes.

It localises to the zona pellucida. It is found in the cell membrane. Component of the zona pellucida, an extracellular matrix surrounding oocytes which mediates sperm binding, induction of the acrosome reaction and prevents post-fertilization polyspermy. The zona pellucida is composed of 3 to 4 glycoproteins, ZP1, ZP2, ZP3, and ZP4. ZP4 may act as a sperm receptor. In Rattus norvegicus (Rat), this protein is Zona pellucida sperm-binding protein 4 (Zp4).